A 77-amino-acid chain; its full sequence is MAIIKPGGHYIVPTKGEEISTFILENEGDELARCELNLNGNIQETLDILPHSTQTKMMDVRGKLTLCNIGKTHIKIL.

This is an uncharacterized protein from Dictyostelium discoideum (Social amoeba).